Reading from the N-terminus, the 429-residue chain is Adenylosuccinate synthetase (429 aa).

GTP-binding positions include 12–18 (GDEGKGK) and 40–42 (GHT). Asp13 serves as the catalytic Proton acceptor. 2 residues coordinate Mg(2+): Asp13 and Gly40. IMP-binding positions include 13–16 (DEGK), 38–41 (NAGH), Thr128, Arg142, Gln223, Thr238, and Arg302. The active-site Proton donor is the His41. 298–304 (TVTGRPR) is a substrate binding site. GTP is bound by residues Arg304, 330-332 (LLD), and 412-414 (SVG).

Belongs to the adenylosuccinate synthetase family. Homodimer. Requires Mg(2+) as cofactor.

Its subcellular location is the cytoplasm. It carries out the reaction IMP + L-aspartate + GTP = N(6)-(1,2-dicarboxyethyl)-AMP + GDP + phosphate + 2 H(+). Its pathway is purine metabolism; AMP biosynthesis via de novo pathway; AMP from IMP: step 1/2. Functionally, plays an important role in the de novo pathway of purine nucleotide biosynthesis. Catalyzes the first committed step in the biosynthesis of AMP from IMP. The polypeptide is Adenylosuccinate synthetase (Lactobacillus acidophilus (strain ATCC 700396 / NCK56 / N2 / NCFM)).